The chain runs to 430 residues: Lipoyl synthase, mitochondrial (430 aa).

The N-terminal 29 residues, 1–29 (MASPVPIQRLQAPLRRSLARAAALSTRSY), are a transit peptide targeting the mitochondrion. A compositionally biased stretch (low complexity) spans 28 to 58 (SYATIPSGPSSQPTSQESSSAASASAPATKP). The segment at 28–62 (SYATIPSGPSSQPTSQESSSAASASAPATKPRPTY) is disordered. [4Fe-4S] cluster contacts are provided by Cys142, Cys147, Cys153, Cys173, Cys177, Cys180, and Ser390. Residues 156–379 (GSNKAAATAT…RQRALDMGFL (224 aa)) enclose the Radical SAM core domain.

It belongs to the radical SAM superfamily. Lipoyl synthase family. It depends on [4Fe-4S] cluster as a cofactor.

Its subcellular location is the mitochondrion. The catalysed reaction is [[Fe-S] cluster scaffold protein carrying a second [4Fe-4S](2+) cluster] + N(6)-octanoyl-L-lysyl-[protein] + 2 oxidized [2Fe-2S]-[ferredoxin] + 2 S-adenosyl-L-methionine + 4 H(+) = [[Fe-S] cluster scaffold protein] + N(6)-[(R)-dihydrolipoyl]-L-lysyl-[protein] + 4 Fe(3+) + 2 hydrogen sulfide + 2 5'-deoxyadenosine + 2 L-methionine + 2 reduced [2Fe-2S]-[ferredoxin]. The protein operates within protein modification; protein lipoylation via endogenous pathway; protein N(6)-(lipoyl)lysine from octanoyl-[acyl-carrier-protein]: step 2/2. In terms of biological role, catalyzes the radical-mediated insertion of two sulfur atoms into the C-6 and C-8 positions of the octanoyl moiety bound to the lipoyl domains of lipoate-dependent enzymes, thereby converting the octanoylated domains into lipoylated derivatives. This is Lipoyl synthase, mitochondrial from Neurospora crassa (strain ATCC 24698 / 74-OR23-1A / CBS 708.71 / DSM 1257 / FGSC 987).